Here is a 40-residue protein sequence, read N- to C-terminus: Alpha-conotoxin GIC (40 aa).

Residues 1-20 (SDGRNDAAKAFDLISSTVKK) constitute a propeptide that is removed on maturation. Disulfide bonds link Cys22–Cys28 and Cys23–Cys36. The interval 24-26 (SHP) is ser-Xaa-Pro motif, crucial for potent interaction with nAChR. The residue at position 36 (Cys36) is a Cysteine amide.

Expressed by the venom duct.

It is found in the secreted. Functionally, alpha-conotoxins bind to the nicotinic acetylcholine receptors (nAChR) and inhibit them. This toxin reversibly blocks neuronal nAChRs (alpha-3/beta-2 = alpha-6 or -3/beta-2 or -3 &gt; alpha-3/beta-4 = alpha-4/beta-2). The protein is Alpha-conotoxin GIC of Conus geographus (Geography cone).